A 235-amino-acid polypeptide reads, in one-letter code: 2-C-methyl-D-erythritol 4-phosphate cytidylyltransferase (235 aa).

It belongs to the IspD/TarI cytidylyltransferase family. IspD subfamily.

The catalysed reaction is 2-C-methyl-D-erythritol 4-phosphate + CTP + H(+) = 4-CDP-2-C-methyl-D-erythritol + diphosphate. The protein operates within isoprenoid biosynthesis; isopentenyl diphosphate biosynthesis via DXP pathway; isopentenyl diphosphate from 1-deoxy-D-xylulose 5-phosphate: step 2/6. In terms of biological role, catalyzes the formation of 4-diphosphocytidyl-2-C-methyl-D-erythritol from CTP and 2-C-methyl-D-erythritol 4-phosphate (MEP). The polypeptide is 2-C-methyl-D-erythritol 4-phosphate cytidylyltransferase (Pseudomonas fluorescens (strain SBW25)).